Reading from the N-terminus, the 455-residue chain is MIEKSNNPFLSIDPIVERTKSNGEGLPLLSEKTKKGFDFTQIVVYLVGLSDGLTHLASLAIYYLFKDYFRLTPYQVSLILMYPYIPFILKPVIALITDSFSIFGMRRKPYLFLFSLFQSLNFLALAFLNLSVIQASLILFFISLCASFCTTVAEALVVESSMGQTYSQGTNKVTEFIASKAIGSLSVAYFSGYFLEKMPREYIFIATSIFPLIISLSCLFLKEKEYSTNRNIFNQLSDLIKFINTPIFLGPFLYIFVYMSGPDYDDAFFFFCTNKLGFRPSFMGTLRLTYGIASLIGIIIYRVFLKNCSLRKTLIITTLVSFPIYISPIILTEHINKFLGISNELFVLSGGFLIEAITEIQLLPLFILTANICQPGLEASVFATILSVKNLGSLTKKGTSSFITYLMKIDSYNFDNLSLYILTCGFFLLFSLTLVPLLPNEEHIEKLKNKETSKG.

Transmembrane regions (helical) follow at residues 42–64, 84–103, 110–131, 137–157, 177–195, 201–221, 242–261, and 281–301; these read IVVYLVGLSDGLTHLASLAIYYL, YIPFILKPVIALITDSFSIF, YLFLFSLFQSLNFLALAFLNLS, LILFFISLCASFCTTVAEALV, IASKAIGSLSVAYFSGYFL, EYIFIATSIFPLIISLSCLFL, FINTPIFLGPFLYIFVYMSG, and SFMGTLRLTYGIASLIGIIIY. Asn-307 is a glycosylation site (N-linked (GlcNAc...) asparagine). Transmembrane regions (helical) follow at residues 313-331 and 347-367; these read TLIITTLVSFPIYISPIIL and VLSGGFLIEAITEIQLLPLFI. Asn-416 carries an N-linked (GlcNAc...) asparagine glycan. The helical transmembrane segment at 417 to 438 threads the bilayer; sequence LSLYILTCGFFLLFSLTLVPLL.

Belongs to the major facilitator superfamily. Folate-biopterin transporter (TC 2.A.71) family.

The protein localises to the cell membrane. The catalysed reaction is folate(in) + H(+)(in) = folate(out) + H(+)(out). It catalyses the reaction (6S)-5-methyl-5,6,7,8-tetrahydrofolate(in) + H(+)(in) = (6S)-5-methyl-5,6,7,8-tetrahydrofolate(out) + H(+)(out). Its activity is regulated as follows. Transport of folates is inhibited by probenecid and methotrexate. In terms of biological role, folate transporter with broad substrate specificity. Transports folic acid, folinic acid, pteroic acid, dihydropteroic acid, the folate precursor p-amino benzoic acid (pABA) and the human folate catabolite pABA monoglutamate. Can transport 5-methyltetrahydrofolate with low efficiency. The chain is Folate transporter 2 from Plasmodium falciparum (isolate 3D7).